A 496-amino-acid polypeptide reads, in one-letter code: Cytochrome P450 71B1 (496 aa).

A heme-binding site is contributed by cysteine 436.

Belongs to the cytochrome P450 family. Heme serves as cofactor.

In Thlaspi arvense (Field penny-cress), this protein is Cytochrome P450 71B1 (CYP71B1).